Reading from the N-terminus, the 191-residue chain is dTTP/UTP pyrophosphatase (191 aa).

The Proton acceptor role is filled by Asp69.

The protein belongs to the Maf family. YhdE subfamily. A divalent metal cation serves as cofactor.

It localises to the cytoplasm. It catalyses the reaction dTTP + H2O = dTMP + diphosphate + H(+). It carries out the reaction UTP + H2O = UMP + diphosphate + H(+). Functionally, nucleoside triphosphate pyrophosphatase that hydrolyzes dTTP and UTP. May have a dual role in cell division arrest and in preventing the incorporation of modified nucleotides into cellular nucleic acids. In Pelotomaculum thermopropionicum (strain DSM 13744 / JCM 10971 / SI), this protein is dTTP/UTP pyrophosphatase.